The sequence spans 255 residues: MRILCTNDDGIYAPGLEIIEQIAKDLSDDVWVVAPEHDQSGVSHSLTLNDPLRLRQIGPRHFAVKGTPTDCVIMGSRYILADKAPDLVLSGVNRGRNLAEDVVYSGTVAGALEGTMLGLPSFALSQEFSMETGDRPVWETARTFAPQILRRVIEIGIPKNTVVNVNFPACAPEDVAGVLVTRMGKRNLGFLKIDERRDGRGNPYFWIGFEKADDADTPASGSDLAAIAGQCVSVTPLRLDRTDEAFAAILTAKLK.

4 residues coordinate a divalent metal cation: aspartate 8, aspartate 9, serine 40, and asparagine 93.

This sequence belongs to the SurE nucleotidase family. It depends on a divalent metal cation as a cofactor.

Its subcellular location is the cytoplasm. The catalysed reaction is a ribonucleoside 5'-phosphate + H2O = a ribonucleoside + phosphate. Its function is as follows. Nucleotidase that shows phosphatase activity on nucleoside 5'-monophosphates. This Nitrobacter winogradskyi (strain ATCC 25391 / DSM 10237 / CIP 104748 / NCIMB 11846 / Nb-255) protein is 5'-nucleotidase SurE.